Consider the following 296-residue polypeptide: Cobalamin trafficking protein CblD (296 aa).

Residues 1 to 38 (MAHVLCNRARLVSYLPGFCSLVKRVINPRAFSTAGSSG) constitute a mitochondrion transit peptide. Lys-203 is subject to N6-acetyllysine.

Heterodimer with MMACHC. Forms a multiprotein complex with MMACHC, MTR and MTRR.

The protein localises to the cytoplasm. It localises to the mitochondrion. In terms of biological role, involved in cobalamin metabolism and trafficking. Plays a role in regulating the biosynthesis and the proportion of two coenzymes, methylcob(III)alamin (MeCbl) and 5'-deoxyadenosylcobalamin (AdoCbl). Promotes oxidation of cob(II)alamin bound to MMACHC. The processing of cobalamin in the cytosol occurs in a multiprotein complex composed of at least MMACHC, MMADHC, MTRR (methionine synthase reductase) and MTR (methionine synthase) which may contribute to shuttle safely and efficiently cobalamin towards MTR in order to produce methionine. The sequence is that of Cobalamin trafficking protein CblD from Mus musculus (Mouse).